The following is a 118-amino-acid chain: DNA-binding protein Msp_0595 (118 aa).

Over residues 15-44 (LKQQQLAAQQQQGASLEQMQQEEQARQQFE) the composition is skewed to low complexity. The tract at residues 15 to 45 (LKQQQLAAQQQQGASLEQMQQEEQARQQFEN) is disordered.

It belongs to the PDCD5 family.

This is DNA-binding protein Msp_0595 from Methanosphaera stadtmanae (strain ATCC 43021 / DSM 3091 / JCM 11832 / MCB-3).